The chain runs to 245 residues: GATA zinc finger domain-containing protein 1 (245 aa).

The segment at 9 to 33 (CSMCKTNTSSMWKKGSQGEILCNNC) adopts a GATA-type zinc-finger fold. Residues 39-70 (TAAGGNNNNNSSSSTSGSSSYTGTTFASTSTS) show a composition bias toward low complexity. Residues 39 to 110 (TAAGGNNNNN…PAAEKKVSTK (72 aa)) are disordered. Residues 71 to 80 (QQSNGGNTKQ) show a composition bias toward polar residues.

It localises to the nucleus. Functionally, component of some chromatin complex recruited to chromatin sites methylated 'Lys-4' of histone H3 (H3K4me), with a preference for trimethylated form (H3K4me3). The polypeptide is GATA zinc finger domain-containing protein 1 (gatad1) (Xenopus laevis (African clawed frog)).